The primary structure comprises 365 residues: Histidinol-phosphate aminotransferase (365 aa).

Residue lysine 221 is modified to N6-(pyridoxal phosphate)lysine.

It belongs to the class-II pyridoxal-phosphate-dependent aminotransferase family. Histidinol-phosphate aminotransferase subfamily. In terms of assembly, homodimer. Requires pyridoxal 5'-phosphate as cofactor.

The catalysed reaction is L-histidinol phosphate + 2-oxoglutarate = 3-(imidazol-4-yl)-2-oxopropyl phosphate + L-glutamate. The protein operates within amino-acid biosynthesis; L-histidine biosynthesis; L-histidine from 5-phospho-alpha-D-ribose 1-diphosphate: step 7/9. This is Histidinol-phosphate aminotransferase from Rhodopseudomonas palustris (strain HaA2).